A 102-amino-acid polypeptide reads, in one-letter code: Glutaredoxin 1 (102 aa).

In terms of domain architecture, Glutaredoxin spans 1 to 96; sequence MNKAILHTII…KLLEGQPKKK (96 aa). An intrachain disulfide couples Cys-17 to Cys-20.

Belongs to the glutaredoxin family. As to quaternary structure, monomer.

It localises to the cytoplasm. Its function is as follows. Has a glutathione-disulfide oxidoreductase activity in the presence of NADPH and glutathione reductase. Reduces low molecular weight disulfides and proteins. The protein is Glutaredoxin 1 (grxC1) of Rickettsia felis (strain ATCC VR-1525 / URRWXCal2) (Rickettsia azadi).